The following is a 423-amino-acid chain: Putative competence-damage inducible protein (423 aa).

This sequence belongs to the CinA family.

The chain is Putative competence-damage inducible protein from Streptococcus pyogenes serotype M2 (strain MGAS10270).